The sequence spans 338 residues: S-adenosylmethionine:tRNA ribosyltransferase-isomerase (338 aa).

It belongs to the QueA family. As to quaternary structure, monomer.

The protein localises to the cytoplasm. The enzyme catalyses 7-aminomethyl-7-carbaguanosine(34) in tRNA + S-adenosyl-L-methionine = epoxyqueuosine(34) in tRNA + adenine + L-methionine + 2 H(+). It participates in tRNA modification; tRNA-queuosine biosynthesis. Its function is as follows. Transfers and isomerizes the ribose moiety from AdoMet to the 7-aminomethyl group of 7-deazaguanine (preQ1-tRNA) to give epoxyqueuosine (oQ-tRNA). This Carboxydothermus hydrogenoformans (strain ATCC BAA-161 / DSM 6008 / Z-2901) protein is S-adenosylmethionine:tRNA ribosyltransferase-isomerase.